The primary structure comprises 134 residues: Protein LctB (134 aa).

This chain is Protein LctB (lctB), found in Bacillus caldotenax.